The primary structure comprises 497 residues: Putative glucuronosyltransferase PGSIP8 (497 aa).

The helical transmembrane segment at 3-23 (LQRGFVFLSLVLSFMIIETTA) threads the bilayer. Positions 165 and 167 each coordinate Mn(2+). A run of 5 helical transmembrane segments spans residues 319-339 (YSAEMPLVIIQAMFYLGIIVV), 365-385 (GFKLIALLSVVAAYIFPFFTI), 388-408 (TIHPLIGWSLYLMASFALSSI), 418-438 (LPVLTPWLGILGTLLVMAFPW), and 442-462 (GVVRALSVFAYAFCCAPFVWV).

The protein belongs to the glycosyltransferase 8 family. Glycogenin subfamily. It depends on Mn(2+) as a cofactor.

The protein resides in the membrane. The chain is Putative glucuronosyltransferase PGSIP8 (PGSIP8) from Arabidopsis thaliana (Mouse-ear cress).